A 178-amino-acid polypeptide reads, in one-letter code: C-phycoerythrin class 2 subunit beta (178 aa).

Positions 50 and 61 each coordinate phycourobilin. Residues Cys82 and Cys159 each contribute to the (2R,3E)-phycoerythrobilin site.

It belongs to the phycobiliprotein family. Heterodimer of an alpha and a beta chain. Post-translationally, contains two covalently linked phycoerythrobilin chromophores and one covalently linked phycourobilin chromophore.

The protein resides in the cellular thylakoid membrane. In terms of biological role, light-harvesting photosynthetic bile pigment-protein from the phycobiliprotein complex. The chain is C-phycoerythrin class 2 subunit beta (mpeB) from Synechococcus sp. (strain WH8103).